A 163-amino-acid chain; its full sequence is Neurotrophin-3 (163 aa).

A signal peptide spans isoleucine 1–serine 3. Positions threonine 4–arginine 119 are excised as a propeptide. The N-linked (GlcNAc...) asparagine glycan is linked to asparagine 112.

This sequence belongs to the NGF-beta family.

Its subcellular location is the secreted. Functionally, seems to promote the survival of visceral and proprioceptive sensory neurons. This Eryx conicus (Rough-scaled sand boa) protein is Neurotrophin-3 (NTF3).